A 244-amino-acid polypeptide reads, in one-letter code: tRNA (guanine-N(1)-)-methyltransferase (244 aa).

Residues G113 and 133–138 each bind S-adenosyl-L-methionine; that span reads IGDYVL.

The protein belongs to the RNA methyltransferase TrmD family. Homodimer.

The protein localises to the cytoplasm. The enzyme catalyses guanosine(37) in tRNA + S-adenosyl-L-methionine = N(1)-methylguanosine(37) in tRNA + S-adenosyl-L-homocysteine + H(+). Its function is as follows. Specifically methylates guanosine-37 in various tRNAs. The sequence is that of tRNA (guanine-N(1)-)-methyltransferase from Bacillus cereus (strain G9842).